Reading from the N-terminus, the 539-residue chain is GMP synthase [glutamine-hydrolyzing] (539 aa).

Residues 4–202 enclose the Glutamine amidotransferase type-1 domain; it reads KILILDFGSQ…VLQIAGAKPD (199 aa). The active-site Nucleophile is Cys-81. Catalysis depends on residues His-176 and Glu-178. One can recognise a GMPS ATP-PPase domain in the interval 203–395; sequence WIMSNHIEEA…LGLPPEMVYR (193 aa). Residue 230–236 participates in ATP binding; the sequence is SGGVDSS.

In terms of assembly, homodimer.

The enzyme catalyses XMP + L-glutamine + ATP + H2O = GMP + L-glutamate + AMP + diphosphate + 2 H(+). The protein operates within purine metabolism; GMP biosynthesis; GMP from XMP (L-Gln route): step 1/1. In terms of biological role, catalyzes the synthesis of GMP from XMP. This is GMP synthase [glutamine-hydrolyzing] from Burkholderia ambifaria (strain ATCC BAA-244 / DSM 16087 / CCUG 44356 / LMG 19182 / AMMD) (Burkholderia cepacia (strain AMMD)).